A 423-amino-acid chain; its full sequence is UDP-N-acetylmuramoylalanine--D-glutamate ligase (423 aa).

Gly112–Thr118 lines the ATP pocket.

The protein belongs to the MurCDEF family.

It is found in the cytoplasm. It catalyses the reaction UDP-N-acetyl-alpha-D-muramoyl-L-alanine + D-glutamate + ATP = UDP-N-acetyl-alpha-D-muramoyl-L-alanyl-D-glutamate + ADP + phosphate + H(+). The protein operates within cell wall biogenesis; peptidoglycan biosynthesis. Functionally, cell wall formation. Catalyzes the addition of glutamate to the nucleotide precursor UDP-N-acetylmuramoyl-L-alanine (UMA). The protein is UDP-N-acetylmuramoylalanine--D-glutamate ligase of Thermosipho africanus (strain TCF52B).